A 309-amino-acid polypeptide reads, in one-letter code: Porphobilinogen deaminase (309 aa).

An S-(dipyrrolylmethanemethyl)cysteine modification is found at Cys-240.

The protein belongs to the HMBS family. Monomer. Requires dipyrromethane as cofactor.

It carries out the reaction 4 porphobilinogen + H2O = hydroxymethylbilane + 4 NH4(+). Its pathway is porphyrin-containing compound metabolism; protoporphyrin-IX biosynthesis; coproporphyrinogen-III from 5-aminolevulinate: step 2/4. Functionally, tetrapolymerization of the monopyrrole PBG into the hydroxymethylbilane pre-uroporphyrinogen in several discrete steps. This chain is Porphobilinogen deaminase, found in Chromobacterium violaceum (strain ATCC 12472 / DSM 30191 / JCM 1249 / CCUG 213 / NBRC 12614 / NCIMB 9131 / NCTC 9757 / MK).